Consider the following 2349-residue polypeptide: Reducing polyketide synthase AFT16-1 (2349 aa).

Basic and acidic residues predominate over residues 1-14 (MNGKSRDNGHDGKR). Disordered regions lie at residues 1–21 (MNGK…VPAE) and 37–80 (TNPS…TSNS). In terms of domain architecture, Ketosynthase family 3 (KS3) spans 20–462 (AEPIAIVGTA…GTNAHTILES (443 aa)). Catalysis depends on for beta-ketoacyl synthase activity residues Cys194, His333, and His382. The malonyl-CoA:ACP transacylase (MAT) domain stretch occupies residues 578 to 888 (VFTGQGAQWP…LLYKGVLERF (311 aa)). An N-terminal hotdog fold region spans residues 958-1092 (HPLLGFRSVD…GDILLSHFAK (135 aa)). The tract at residues 958–1263 (HPLLGFRSVD…QVEGLKFSCM (306 aa)) is dehydratase (DH) domain. Residues 958-1269 (HPLLGFRSVD…FSCMYPAQET (312 aa)) enclose the PKS/mFAS DH domain. Catalysis depends on His990, which acts as the Proton acceptor; for dehydratase activity. The C-terminal hotdog fold stretch occupies residues 1111–1269 (MSSVEPSLFY…FSCMYPAQET (159 aa)). The Proton donor; for dehydratase activity role is filled by Asp1170. Positions 1976 to 2164 (SPNKTYLLVG…VVGVGYVARA (189 aa)) are ketoreductase (KR) domain. The 75-residue stretch at 2273 to 2347 (EILSGSLKQK…GLCLEAIGQW (75 aa)) folds into the Carrier domain. Ser2307 is modified (O-(pantetheine 4'-phosphoryl)serine).

The protein operates within mycotoxin biosynthesis. Its function is as follows. Reducing polyketide synthase; part of the gene clusters that mediate the biosynthesis of the host-selective toxins (HSTs) AF-toxins responsible for Alternaria black spot of strawberry disease by the strawberry pathotype. AF-toxin I and III are valine derivatives of 2,3-dyhydroxy-isovaleric acid and 2-hydroxy-isovaleric acid respectively, while AF II is an isoleucine derivative of 2-hydroxy-valeric acid. These derivatives are bound to a 9,10-epoxy-8-hydroxy-9-methyl-decatrienoic acid (EDA) moiety. On cellular level, AF-toxins affect plasma membrane of susceptible cells and cause a sudden increase in loss of K(+) after a few minutes of toxin treatment. The aldo-keto reductase AFTS1 catalyzes the conversion of 2-keto-isovaleric acid (2-KIV) to 2-hydroxy-isovaleric acid (2-HIV) by reduction of its ketone to an alcohol. The acyl-CoA ligase AFT1, the hydrolase AFT2 and the enoyl-CoA hydratases AFT3 and AFT6, but also the polyketide synthase AFT9, the acyl-CoA dehydrogenase AFT10, the cytochrome P450 monooxygenase AFT11 and the oxidoreductase AFT12 are all involved in the biosynthesis of the AK-, AF- and ACT-toxin common EDA structural moiety. The exact function of each enzyme, and of additional enzymes identified within the AF-toxin clusters have still to be determined. The protein is Reducing polyketide synthase AFT16-1 of Alternaria alternata (Alternaria rot fungus).